A 201-amino-acid polypeptide reads, in one-letter code: FMN reductase (NADH) RutF (201 aa).

Residues 169-201 form a disordered region; sequence APRSGAAPAEPARAARALGARPAEGPALALRSA.

The protein belongs to the non-flavoprotein flavin reductase family. RutF subfamily.

It carries out the reaction FMNH2 + NAD(+) = FMN + NADH + 2 H(+). Catalyzes the reduction of FMN to FMNH2 which is used to reduce pyrimidine by RutA via the Rut pathway. The protein is FMN reductase (NADH) RutF of Methylorubrum extorquens (strain ATCC 14718 / DSM 1338 / JCM 2805 / NCIMB 9133 / AM1) (Methylobacterium extorquens).